Reading from the N-terminus, the 550-residue chain is 2-succinyl-5-enolpyruvyl-6-hydroxy-3-cyclohexene-1-carboxylate synthase (550 aa).

The protein belongs to the TPP enzyme family. MenD subfamily. In terms of assembly, homodimer. The cofactor is Mg(2+). It depends on Mn(2+) as a cofactor. Thiamine diphosphate serves as cofactor.

It carries out the reaction isochorismate + 2-oxoglutarate + H(+) = 5-enolpyruvoyl-6-hydroxy-2-succinyl-cyclohex-3-ene-1-carboxylate + CO2. The protein operates within quinol/quinone metabolism; 1,4-dihydroxy-2-naphthoate biosynthesis; 1,4-dihydroxy-2-naphthoate from chorismate: step 2/7. It participates in quinol/quinone metabolism; menaquinone biosynthesis. Functionally, catalyzes the thiamine diphosphate-dependent decarboxylation of 2-oxoglutarate and the subsequent addition of the resulting succinic semialdehyde-thiamine pyrophosphate anion to isochorismate to yield 2-succinyl-5-enolpyruvyl-6-hydroxy-3-cyclohexene-1-carboxylate (SEPHCHC). In Flavobacterium psychrophilum (strain ATCC 49511 / DSM 21280 / CIP 103535 / JIP02/86), this protein is 2-succinyl-5-enolpyruvyl-6-hydroxy-3-cyclohexene-1-carboxylate synthase.